Consider the following 187-residue polypeptide: Auxin-binding protein T85 (187 aa).

The signal sequence occupies residues 1–20; the sequence is MARHVLVVVAVLLFATAEAS. C22 and C177 are oxidised to a cystine. The Zn(2+) site is built by H78, H80, and E84. N-linked (GlcNAc...) asparagine glycosylation occurs at N117. H128 serves as a coordination point for Zn(2+). Residues 184–187 carry the Prevents secretion from ER motif; sequence KDEL.

Homodimer.

Its subcellular location is the endoplasmic reticulum lumen. In terms of biological role, this is probably a receptor for the plant hormone auxin. This is Auxin-binding protein T85 (T85) from Nicotiana tabacum (Common tobacco).